The chain runs to 260 residues: UPF0246 protein Cbei_1739 (260 aa).

It belongs to the UPF0246 family.

In Clostridium beijerinckii (strain ATCC 51743 / NCIMB 8052) (Clostridium acetobutylicum), this protein is UPF0246 protein Cbei_1739.